We begin with the raw amino-acid sequence, 375 residues long: Alcohol dehydrogenase 1 (375 aa).

S2 carries the N-acetylserine modification. Residues C47, H68, C98, C101, C104, C112, and C175 each contribute to the Zn(2+) site. NAD(+) is bound by residues 200-205 (WSGRVG), D224, and K229. N6-succinyllysine is present on K234. Position 293 to 295 (293 to 295 (VGV)) interacts with NAD(+). Residue K340 is modified to N6-succinyllysine. R370 serves as a coordination point for NAD(+).

The protein belongs to the zinc-containing alcohol dehydrogenase family. Class-I subfamily. Homodimer. The cofactor is Zn(2+).

Its subcellular location is the cytoplasm. It carries out the reaction a primary alcohol + NAD(+) = an aldehyde + NADH + H(+). It catalyses the reaction a secondary alcohol + NAD(+) = a ketone + NADH + H(+). The sequence is that of Alcohol dehydrogenase 1 (ADH1) from Geomys bursarius (Plains pocket gopher).